The primary structure comprises 362 residues: GTP 3',8-cyclase (362 aa).

Residues 8-228 (SLGRPLRDLR…ARISSHWPID (221 aa)) enclose the Radical SAM core domain. Residue Arg-17 coordinates GTP. [4Fe-4S] cluster is bound by residues Cys-24 and Cys-28. Tyr-30 provides a ligand contact to S-adenosyl-L-methionine. Cys-31 lines the [4Fe-4S] cluster pocket. GTP is bound at residue Arg-71. Gly-75 contacts S-adenosyl-L-methionine. Thr-102 provides a ligand contact to GTP. Ser-126 contributes to the S-adenosyl-L-methionine binding site. Lys-164 lines the GTP pocket. Residue Met-198 coordinates S-adenosyl-L-methionine. Residues Cys-262 and Cys-265 each coordinate [4Fe-4S] cluster. GTP is bound at residue 267 to 269 (RLR). Cys-279 contributes to the [4Fe-4S] cluster binding site. Positions 325–362 (ALDSDGSREDADESEASAVPGRSTHPGHRKVEMSYIGG) are disordered.

This sequence belongs to the radical SAM superfamily. MoaA family. As to quaternary structure, monomer and homodimer. Requires [4Fe-4S] cluster as cofactor.

The catalysed reaction is GTP + AH2 + S-adenosyl-L-methionine = (8S)-3',8-cyclo-7,8-dihydroguanosine 5'-triphosphate + 5'-deoxyadenosine + L-methionine + A + H(+). It functions in the pathway cofactor biosynthesis; molybdopterin biosynthesis. Catalyzes the cyclization of GTP to (8S)-3',8-cyclo-7,8-dihydroguanosine 5'-triphosphate. The protein is GTP 3',8-cyclase of Acidothermus cellulolyticus (strain ATCC 43068 / DSM 8971 / 11B).